A 239-amino-acid chain; its full sequence is N-glycosylase/DNA lyase (239 aa).

Residues glutamine 24, serine 51, and tryptophan 62 each coordinate 8-oxoguanine. Residues 118–182 form a helix-hairpin-helix region; that stretch reads ERYYEDMTLL…EDVRIIKLTR (65 aa). The Schiff-base intermediate with DNA role is filled by lysine 142. 8-oxoguanine-binding residues include phenylalanine 146 and proline 172. Residue aspartate 174 is part of the active site. Positions 208 and 212 each coordinate 8-oxoguanine.

The protein belongs to the archaeal N-glycosylase/DNA lyase (AGOG) family.

The enzyme catalyses 2'-deoxyribonucleotide-(2'-deoxyribose 5'-phosphate)-2'-deoxyribonucleotide-DNA = a 3'-end 2'-deoxyribonucleotide-(2,3-dehydro-2,3-deoxyribose 5'-phosphate)-DNA + a 5'-end 5'-phospho-2'-deoxyribonucleoside-DNA + H(+). DNA repair enzyme that is part of the base excision repair (BER) pathway; protects from oxidative damage by removing the major product of DNA oxidation, 8-oxoguanine (GO), from single- and double-stranded DNA substrates. The sequence is that of N-glycosylase/DNA lyase from Pyrococcus horikoshii (strain ATCC 700860 / DSM 12428 / JCM 9974 / NBRC 100139 / OT-3).